The sequence spans 308 residues: Aspartate carbamoyltransferase catalytic subunit (308 aa).

Positions 59 and 60 each coordinate carbamoyl phosphate. Lys87 serves as a coordination point for L-aspartate. Carbamoyl phosphate contacts are provided by Arg109, His137, and Gln140. L-aspartate-binding residues include Arg173 and Arg224. Carbamoyl phosphate-binding residues include Gly267 and Pro268.

It belongs to the aspartate/ornithine carbamoyltransferase superfamily. ATCase family. In terms of assembly, heterododecamer (2C3:3R2) of six catalytic PyrB chains organized as two trimers (C3), and six regulatory PyrI chains organized as three dimers (R2).

It carries out the reaction carbamoyl phosphate + L-aspartate = N-carbamoyl-L-aspartate + phosphate + H(+). It participates in pyrimidine metabolism; UMP biosynthesis via de novo pathway; (S)-dihydroorotate from bicarbonate: step 2/3. Its function is as follows. Catalyzes the condensation of carbamoyl phosphate and aspartate to form carbamoyl aspartate and inorganic phosphate, the committed step in the de novo pyrimidine nucleotide biosynthesis pathway. The polypeptide is Aspartate carbamoyltransferase catalytic subunit (Helicobacter acinonychis (strain Sheeba)).